Reading from the N-terminus, the 284-residue chain is Homeobox protein SIX1 (284 aa).

Positions 124–183 (GEETSYCFKEKSRGVLREWYAHNPYPSPREKRELAEATGLTTTQVSNWFKNRRQRDRAAE) form a DNA-binding region, homeobox. A disordered region spans residues 168–284 (VSNWFKNRRQ…LTSSLVDLGS (117 aa)). Residues 179–190 (DRAAEAKERENT) show a composition bias toward basic and acidic residues. A compositionally biased stretch (polar residues) spans 227–284 (DQNSVLLLQSNMGHARSSNYSLPGLTASQPSHGLQAHQHQLQDSLLGPLTSSLVDLGS).

Belongs to the SIX/Sine oculis homeobox family. Interacts with DACH1. Interacts with EYA1. Interacts with EYA2. Interacts with CDH1. Interacts with TBX18. Interacts with CEBPA. Interacts with CEBPB. Interacts with EBF2. Phosphorylated during interphase; becomes hyperphosphorylated during mitosis. Hyperphosphorylation impairs binding to promoter elements. In terms of processing, ubiquitinated by the anaphase promoting complex (APC), leading to its proteasomal degradation. Expressed in phalangeal tendons and in skeletal muscle and in head and body mesenchyme.

Its subcellular location is the nucleus. The protein resides in the cytoplasm. Transcription factor that is involved in the regulation of cell proliferation, apoptosis and embryonic development. Plays an important role in the development of several organs, including kidney, muscle and inner ear. Depending on context, functions as a transcriptional repressor or activator. Lacks an activation domain, and requires interaction with EYA family members for transcription activation. Mediates nuclear translocation of EYA1 and EYA2. Binds the 5'-TCA[AG][AG]TTNC-3' motif present in the MEF3 element in the MYOG promoter and CIDEA enhancer. Regulates the expression of numerous genes, including MYC, CCNA1, CCND1 and EZR. Acts as an activator of the IGFBP5 promoter, probably coactivated by EYA2. Repression of precursor cell proliferation in myoblasts is switched to activation through recruitment of EYA3 to the SIX1-DACH1 complex. During myogenesis, seems to act together with EYA2 and DACH2. Regulates the expression of CCNA1. Promotes brown adipocyte differentiation. This is Homeobox protein SIX1 (Six1) from Mus musculus (Mouse).